Consider the following 246-residue polypeptide: MyoD family inhibitor domain-containing protein (246 aa).

Disordered regions lie at residues 1–93 (MSQE…EEET) and 134–164 (KIQS…ASPE). Over 1-170 (MSQEREPFSP…ASPEDGCVHC (170 aa)) the chain is Extracellular. Polar residues predominate over residues 63-87 (EDNSNSQPIKAQPQRLPQPNTSALE). The region spanning 74–246 (QPQRLPQPNT…MECCGICFPS (173 aa)) is the MDFI domain. The chain crosses the membrane as a helical span at residues 171 to 188 (ILTCLFCEFLTLCNIVVG). Topologically, residues 189-246 (QASCGICTSEACCCCCTEEMGDDCNCPCDMDCGIMDACCESSDCLEICMECCGICFPS) are cytoplasmic.

Belongs to the MDFI family. As to expression, expressed broadly at a low level in the early embryo.

The protein resides in the cytoplasm. The protein localises to the cell membrane. It localises to the secreted. Required to control the activity of various transcription factors through their sequestration in the cytoplasm. Retains nuclear Zic proteins in the cytoplasm and inhibits their transcriptional activation. Required for dorsoanterior development. Necessary for siamois to activate downstream target genes, including gsc, during execution of the dorsal organizer program. Also regulates the transcriptional activity of TCF7L1/TCF3 by interacting directly with TCF7L1/TCF3 and preventing it from binding DNA. Involved in the development of lymphatic vessel valves. It is required to promote lymphatic endothelial cell migration, in a process that involves down-regulation of integrin beta 1 activation and control of cell adhesion to the extracellular matrix. The protein is MyoD family inhibitor domain-containing protein of Xenopus laevis (African clawed frog).